A 96-amino-acid polypeptide reads, in one-letter code: RNA-binding protein Hfq (96 aa).

The Sm domain occupies 9–68; the sequence is DPYLNALRRERIPVSIYLVNGIKLQGQIESFDQFVILLKNTVNQMVYKHAISTVVPARSV. The segment at 67–96 is disordered; the sequence is SVSHHNNSNNSNQQNYQQEQQTDSNVEKAE. The span at 72–87 shows a compositional bias: low complexity; the sequence is NNSNNSNQQNYQQEQQ.

Belongs to the Hfq family. Homohexamer.

In terms of biological role, RNA chaperone that binds small regulatory RNA (sRNAs) and mRNAs to facilitate mRNA translational regulation in response to envelope stress, environmental stress and changes in metabolite concentrations. Also binds with high specificity to tRNAs. The chain is RNA-binding protein Hfq from Pasteurella multocida (strain Pm70).